We begin with the raw amino-acid sequence, 381 residues long: Alkanesulfonate monooxygenase (381 aa).

Belongs to the SsuD family. Homotetramer.

It catalyses the reaction an alkanesulfonate + FMNH2 + O2 = an aldehyde + FMN + sulfite + H2O + 2 H(+). Catalyzes the desulfonation of aliphatic sulfonates. This Escherichia coli O1:K1 / APEC protein is Alkanesulfonate monooxygenase.